Consider the following 292-residue polypeptide: Sulfofructosephosphate aldolase (292 aa).

The active-site Schiff-base intermediate with substrate is K193.

The protein belongs to the aldolase LacD family. In terms of assembly, homotetramer.

It carries out the reaction 6-deoxy-6-sulfo-D-fructose 1-phosphate = (2S)-3-sulfolactaldehyde + dihydroxyacetone phosphate. Functionally, cleaves 6-deoxy-6-sulfo-D-fructose 1-phosphate (SFP) to form dihydroxyacetone phosphate (DHAP) and 3-sulfolactaldehyde (SLA). This Salmonella typhi protein is Sulfofructosephosphate aldolase (yihT).